The primary structure comprises 1286 residues: MSTSFKEIRVSMATTEDIRRWSYGVVKKPETINYRTLKPEKDGLFGEQIFGPTRDWECGCGKYKRSRYRGVVCERCGVEVTQSSVRRERMGHIELAAPVTHIWYFKGVPSRLGYLLDIAPKDLDKVIYFAAYMVVSLDEEGRKEDLQDLENELRLDIKQLRDACDASIASAVSELERTITELQDAKTSASRINKVRSEAENKMANIRREYDDKIEHLERVWDSFKALKVGGLYAEDDVFRDVQDRYGDYFDACMGAEAIKRRLEDFDLQKTAQELGVQIVECRGQRKVRAIKRLRVVNSFITSKANPACMVLDVIPVIPPELRPMVQLDAGRFAASDLNDLYRRVINRNNRLKRLLDLGAPRIIVNNEKRMLQEAVDALFDNGRRGRPVSGTNNRTLKSLSDMLKGKSGRFRQNLLGKRVDYSGRSVIVVGPTLQLHQCGLPKLMALELFKPFIVKRLLDLALAPNIRSARRMIERGDPAVWDMLDAVIKARPVLLNRAPTLHRLGIQAFEPQLVEGKAIQLHPLVCAAFNADFDGDQMAVHLPLSLEAQAEARVLMLASNNILNPSDGRPVTLPSHDMIIGLYHLTTVKPSAKGAGRAFSSVAEAIMAKDRGDLSISAPVKILFSNIVLDGKTLDSAVVETTLGRAIFNEALPDGHPYINELVDKQVISSIINNLAEVYSKVEVANTLDKIKSVGFHWATRSGVTVAISDVVSPPEKQEIISKYETQARGVQQDFEIGLLTDLERRQALVSIWSEATDRVAEAMRKCFPDDNTINTMVTSGARGNWLQVRNIAGMRGLVANPKGETIPRPIISSYREGLSVTEYFISTHGARKGLVDTALKTADSGYLTRRLVDVAQDVVVRERDCGFTRGVRMPVTFRGDDGELHKVENAEHSVYGRTLAEDVKTPDDNLIAKAGEDISGIMIDSFIAAGVESVEVRSVLTCRSKVGVCSACYGRSLATGARVDIGDAVGIVAAQSIGEPGTQLTMRTFHSGGSASAVDITQGLPRVQELFEARTPRAAAPIAEADGTVSIEDGDRARRLILKSDNNEEFSYTVLKRAQLRVKDGSRVSLGDQLVEGSLDPKEVLRVKGIRAVQEYLVNGVQQVYRSQGVPIHNKHIEVIVRQMLRKVTVVDHGDTSMLPGELIDQSRYQELNREAQAEGRKTASARQEVTGITKASLATESWLSAASFQETTRVLTQAVISGRRDPLIGLKENVIIGNLIPAGTGLSVYRDVEPEPRPEAISRMYPTRRPEIENLLEGDSVDPEFDFSSLTQGLELPDDYPVQ.

Zn(2+) contacts are provided by Cys-58, Cys-60, Cys-73, and Cys-76. Mg(2+)-binding residues include Asp-533, Asp-535, and Asp-537. Zn(2+) contacts are provided by Cys-867, Cys-944, Cys-951, and Cys-954.

It belongs to the RNA polymerase beta' chain family. In terms of assembly, the RNAP catalytic core consists of 2 alpha, 1 beta, 1 beta' and 1 omega subunit. When a sigma factor is associated with the core the holoenzyme is formed, which can initiate transcription. Requires Mg(2+) as cofactor. Zn(2+) is required as a cofactor.

It carries out the reaction RNA(n) + a ribonucleoside 5'-triphosphate = RNA(n+1) + diphosphate. In terms of biological role, DNA-dependent RNA polymerase catalyzes the transcription of DNA into RNA using the four ribonucleoside triphosphates as substrates. The sequence is that of DNA-directed RNA polymerase subunit beta' from Tropheryma whipplei (strain TW08/27) (Whipple's bacillus).